Here is a 619-residue protein sequence, read N- to C-terminus: 1-deoxy-D-xylulose-5-phosphate synthase (619 aa).

Residues His80 and 121–123 (GHS) contribute to the thiamine diphosphate site. Mg(2+) is bound at residue Asp152. Residues 153–154 (GA), Asn181, Tyr288, and Glu370 contribute to the thiamine diphosphate site. Residue Asn181 coordinates Mg(2+).

It belongs to the transketolase family. DXPS subfamily. In terms of assembly, homodimer. Mg(2+) is required as a cofactor. Thiamine diphosphate serves as cofactor.

It carries out the reaction D-glyceraldehyde 3-phosphate + pyruvate + H(+) = 1-deoxy-D-xylulose 5-phosphate + CO2. It participates in metabolic intermediate biosynthesis; 1-deoxy-D-xylulose 5-phosphate biosynthesis; 1-deoxy-D-xylulose 5-phosphate from D-glyceraldehyde 3-phosphate and pyruvate: step 1/1. Its function is as follows. Catalyzes the acyloin condensation reaction between C atoms 2 and 3 of pyruvate and glyceraldehyde 3-phosphate to yield 1-deoxy-D-xylulose-5-phosphate (DXP). This Yersinia pseudotuberculosis serotype I (strain IP32953) protein is 1-deoxy-D-xylulose-5-phosphate synthase.